We begin with the raw amino-acid sequence, 301 residues long: Fatty acid elongase 3 (301 aa).

A run of 7 helical transmembrane segments spans residues 31–51 (VPYI…KSIM), 64–84 (IVWN…TVPY), 122–142 (ALAD…LFAL), 161–181 (VIFL…FAYV), 187–207 (GLWF…YYFV), 219–239 (FAPI…IVVC), and 257–277 (FSLH…SQLF). The HxxHH motif motif lies at 165–169 (HWYHH). Catalysis depends on histidine 168, which acts as the Nucleophile.

Belongs to the ELO family.

Its subcellular location is the endoplasmic reticulum membrane. It catalyses the reaction an acyl-CoA + malonyl-CoA + H(+) = a 3-oxoacyl-CoA + CO2 + CoA. It participates in lipid metabolism; fatty acid biosynthesis. In terms of biological role, involved in the synthesis of fatty acids. Elongates C14 fatty acids to C18. In Trypanosoma brucei brucei (strain 927/4 GUTat10.1), this protein is Fatty acid elongase 3.